The following is a 608-amino-acid chain: MHPRVLEVTRRIQARSAATRQRYLEMVRAAASKGPHRGTLPCGNLAHGVAACGESDKQTLRLMNQANVAIVSAYNDMLSAHQPFERFPGLIKQALHEIGSVGQFAGGVPAMCDGVTQGEPGMELSLASRDVIAMSTAIALSHNMFDAALCLGVCDKIVPGLLIGSLRFGHLPTVFVPAGPMPTGISNKEKAAVRQLFAEGKATREELLASEMASYHAPGTCTFYGTANTNQLLVEVMGLHLPGASFVNPNTPLRDELTREAARQASRLTPENGNYVPMAEIVDEKAIVNSVVALLATGGSTNHTLHLLAIAQAAGIQLTWQDMSELSHVVPTLARIYPNGQADINHFQAAGGMSFLIRQLLDGGLLHEDVQTVAGPGLRRYTREPFLEDGRLVWREGPERSLDEAILRPLDKPFSAEGGLRLMEGNLGRGVMKVSAVAPEHQVVEAPVRIFHDQASLAAAFKAGELERDLVAVVRFQGPRANGMPELHKLTPFLGVLQDRGFKVALVTDGRMSGASGKVPAAIHVSPEAIAGGPLARLRDGDRVRVDGVNGELRVLVDDAEWQARSLEPAPQDGNLGCGRELFAFMRNAMSSAEEGACSFTESLNGWR.

C154 and C221 together coordinate [4Fe-4S] cluster.

It belongs to the IlvD/Edd family. The cofactor is [4Fe-4S] cluster.

The enzyme catalyses 6-phospho-D-gluconate = 2-dehydro-3-deoxy-6-phospho-D-gluconate + H2O. Its pathway is carbohydrate metabolism; Entner-Doudoroff pathway. Its function is as follows. Catalyzes the dehydration of 6-phospho-D-gluconate to 2-dehydro-3-deoxy-6-phospho-D-gluconate. The polypeptide is Phosphogluconate dehydratase (Pseudomonas aeruginosa (strain ATCC 15692 / DSM 22644 / CIP 104116 / JCM 14847 / LMG 12228 / 1C / PRS 101 / PAO1)).